The following is a 138-amino-acid chain: Ribonuclease VapC21 (138 aa).

The PINc domain maps to 6-128 (LLDKSAAYRA…ERIAAITRQP (123 aa)). The Mg(2+) site is built by Asp-8 and Asp-97.

This sequence belongs to the PINc/VapC protein family. The cofactor is Mg(2+).

Functionally, toxic component of a type II toxin-antitoxin (TA) system. An RNase. Its toxic effect is neutralized by coexpression with cognate antitoxin VapB21. The chain is Ribonuclease VapC21 from Mycobacterium tuberculosis (strain CDC 1551 / Oshkosh).